The following is a 443-amino-acid chain: Threonine/serine transporter TdcC (443 aa).

Transmembrane regions (helical) follow at residues 22 to 42 (TTWT…FFPI), 44 to 64 (AGFG…PIAF), 97 to 117 (GVVI…IYGV), 140 to 160 (FVAL…KDLM), 163 to 183 (VMSY…LSLI), 207 to 227 (ILIT…FSPI), 261 to 281 (MLMV…LSPA), 311 to 331 (FAIT…FKSF), 366 to 386 (ISMI…PNIL), 389 to 409 (IEAM…MYAI), and 423 to 443 (DNVF…YKLF).

This sequence belongs to the amino acid/polyamine transporter 2 family. SdaC/TdcC subfamily.

The protein localises to the cell inner membrane. The enzyme catalyses L-threonine(in) + H(+)(in) = L-threonine(out) + H(+)(out). The catalysed reaction is L-serine(in) + H(+)(in) = L-serine(out) + H(+)(out). Involved in the import of threonine and serine into the cell, with the concomitant import of a proton (symport system). This chain is Threonine/serine transporter TdcC, found in Shigella boydii serotype 18 (strain CDC 3083-94 / BS512).